A 198-amino-acid polypeptide reads, in one-letter code: Recombination protein RecR (198 aa).

The C4-type zinc-finger motif lies at 57–72; it reads CSVCGRLTDDDPCIIC. One can recognise a Toprim domain in the interval 80-175; sequence TKILVVEDSK…KVTRLARGLA (96 aa).

Belongs to the RecR family.

May play a role in DNA repair. It seems to be involved in an RecBC-independent recombinational process of DNA repair. It may act with RecF and RecO. The polypeptide is Recombination protein RecR (Streptococcus thermophilus (strain CNRZ 1066)).